The chain runs to 1661 residues: Pentafunctional AROM polypeptide (1661 aa).

The segment at 1–388 is 3-dehydroquinate synthase; that stretch reads MATNGVKAEP…YEKKASSVVD (388 aa). NAD(+) is bound by residues 50–52, 87–90, 118–120, and Asp-123; these read DTN, ETSK, and GGV. 7-phospho-2-dehydro-3-deoxy-D-arabino-heptonate is bound at residue Arg-134. Residue 143-144 coordinates NAD(+); it reads TT. 7-phospho-2-dehydro-3-deoxy-D-arabino-heptonate contacts are provided by Asp-150 and Lys-156. Lys-165 contacts NAD(+). Asn-166 is a binding site for 7-phospho-2-dehydro-3-deoxy-D-arabino-heptonate. Residues 183–186 and Asn-194 each bind NAD(+); that span reads FLET. Zn(2+) is bound at residue Glu-198. 7-phospho-2-dehydro-3-deoxy-D-arabino-heptonate contacts are provided by residues 198 to 201 and Lys-254; that span reads EVVK. The active-site Proton acceptor; for 3-dehydroquinate synthase activity is Glu-264. 7-phospho-2-dehydro-3-deoxy-D-arabino-heptonate-binding positions include 268–272 and His-275; that span reads RNLLN. His-275 contacts Zn(2+). His-279 (proton acceptor; for 3-dehydroquinate synthase activity) is an active-site residue. Positions 291 and 360 each coordinate 7-phospho-2-dehydro-3-deoxy-D-arabino-heptonate. A Zn(2+)-binding site is contributed by His-291. Residues 401–850 form an EPSP synthase region; sequence VHPGIPSDLN…WDILNQQFKA (450 aa). Cys-832 (for EPSP synthase activity) is an active-site residue. A shikimate kinase region spans residues 872–1064; the sequence is QKSIFIIGMR…KKKKQSFFVC (193 aa). 879–886 provides a ligand contact to ATP; that stretch reads GMRGAGKT. The segment at 1065-1285 is 3-dehydroquinase; sequence LSAPNLEPCA…TAPGQLSAAD (221 aa). His-1188 (proton acceptor; for 3-dehydroquinate dehydratase activity) is an active-site residue. The active-site Schiff-base intermediate with substrate; for 3-dehydroquinate dehydratase activity is the Lys-1216. Residues 1298-1661 form a shikimate dehydrogenase region; the sequence is TKKFCIFGSP…LTYSWSLGDW (364 aa).

The protein in the N-terminal section; belongs to the sugar phosphate cyclases superfamily. Dehydroquinate synthase family. In the 2nd section; belongs to the EPSP synthase family. This sequence in the 3rd section; belongs to the shikimate kinase family. It in the 4th section; belongs to the type-I 3-dehydroquinase family. The protein in the C-terminal section; belongs to the shikimate dehydrogenase family. Homodimer. It depends on Zn(2+) as a cofactor.

It is found in the cytoplasm. It carries out the reaction 7-phospho-2-dehydro-3-deoxy-D-arabino-heptonate = 3-dehydroquinate + phosphate. The catalysed reaction is 3-dehydroquinate = 3-dehydroshikimate + H2O. It catalyses the reaction shikimate + NADP(+) = 3-dehydroshikimate + NADPH + H(+). The enzyme catalyses shikimate + ATP = 3-phosphoshikimate + ADP + H(+). It carries out the reaction 3-phosphoshikimate + phosphoenolpyruvate = 5-O-(1-carboxyvinyl)-3-phosphoshikimate + phosphate. The protein operates within metabolic intermediate biosynthesis; chorismate biosynthesis; chorismate from D-erythrose 4-phosphate and phosphoenolpyruvate: step 2/7. Its pathway is metabolic intermediate biosynthesis; chorismate biosynthesis; chorismate from D-erythrose 4-phosphate and phosphoenolpyruvate: step 3/7. It functions in the pathway metabolic intermediate biosynthesis; chorismate biosynthesis; chorismate from D-erythrose 4-phosphate and phosphoenolpyruvate: step 4/7. It participates in metabolic intermediate biosynthesis; chorismate biosynthesis; chorismate from D-erythrose 4-phosphate and phosphoenolpyruvate: step 5/7. The protein operates within metabolic intermediate biosynthesis; chorismate biosynthesis; chorismate from D-erythrose 4-phosphate and phosphoenolpyruvate: step 6/7. Functionally, the AROM polypeptide catalyzes 5 consecutive enzymatic reactions in prechorismate polyaromatic amino acid biosynthesis. This chain is Pentafunctional AROM polypeptide, found in Phaeosphaeria nodorum (strain SN15 / ATCC MYA-4574 / FGSC 10173) (Glume blotch fungus).